The following is a 310-amino-acid chain: Probable GTP 3',8-cyclase (310 aa).

One can recognise a Radical SAM core domain in the interval 5–232; it reads RFGRPVTNLR…RRRKYFIPID (228 aa). Arg14 lines the GTP pocket. [4Fe-4S] cluster contacts are provided by Cys21 and Cys25. Tyr27 provides a ligand contact to S-adenosyl-L-methionine. [4Fe-4S] cluster is bound at residue Cys28. Position 61 (Lys61) interacts with GTP. Gly65 lines the S-adenosyl-L-methionine pocket. Position 90 (Thr90) interacts with GTP. S-adenosyl-L-methionine is bound at residue Ser114. GTP is bound at residue Lys150. An S-adenosyl-L-methionine-binding site is contributed by Met189. [4Fe-4S] cluster contacts are provided by Cys250 and Cys253. 255–257 contacts GTP; it reads RLR. Residue Cys267 coordinates [4Fe-4S] cluster.

It belongs to the radical SAM superfamily. MoaA family. [4Fe-4S] cluster serves as cofactor.

The enzyme catalyses GTP + AH2 + S-adenosyl-L-methionine = (8S)-3',8-cyclo-7,8-dihydroguanosine 5'-triphosphate + 5'-deoxyadenosine + L-methionine + A + H(+). The protein operates within cofactor biosynthesis; molybdopterin biosynthesis. Functionally, catalyzes the cyclization of GTP to (8S)-3',8-cyclo-7,8-dihydroguanosine 5'-triphosphate. The sequence is that of Probable GTP 3',8-cyclase from Pyrococcus horikoshii (strain ATCC 700860 / DSM 12428 / JCM 9974 / NBRC 100139 / OT-3).